Reading from the N-terminus, the 498-residue chain is Calcium uptake protein, mitochondrial (498 aa).

A mitochondrion-targeting transit peptide spans 1 to 29 (MPALSHYRSVSSLPSVDRSFLLIQRLRIH). 4 consecutive EF-hand domains span residues 216–241 (EFFM…VTLL), 243–278 (IPES…MRSQ), 329–364 (LTEE…AADA), and 437–472 (LSDN…RERD). Residues Asp-222, Asp-224, Asp-226, Glu-233, Asp-256, Asp-258, Asn-260, Glu-262, and Glu-267 each coordinate Ca(2+). The Ca(2+) site is built by Asp-450, Asn-452, Asp-454, Asn-456, and Glu-461.

This sequence belongs to the MICU1 family. MICU1 subfamily. In terms of tissue distribution, expressed in both green and non-green tissues, including roots, shoots, floral buds and pollen.

It localises to the mitochondrion inner membrane. Its subcellular location is the mitochondrion intermembrane space. In terms of biological role, calcium-binding protein maintaining matrix calcium levels at low concentration. Regulates mitochondrial calcium dynamics in planta by restricting influx. The polypeptide is Calcium uptake protein, mitochondrial (Arabidopsis thaliana (Mouse-ear cress)).